Reading from the N-terminus, the 156-residue chain is Arginine repressor (156 aa).

The protein belongs to the ArgR family.

It localises to the cytoplasm. It participates in amino-acid biosynthesis; L-arginine biosynthesis [regulation]. Its function is as follows. Regulates arginine biosynthesis genes. The protein is Arginine repressor of Escherichia coli O81 (strain ED1a).